Consider the following 569-residue polypeptide: Phenylalanine ammonia-lyase (569 aa).

Tyr78 (proton donor/acceptor) is an active-site residue. The 5-imidazolinone (Ala-Gly) cross-link spans Ala167–Gly169. Ser168 is modified (2,3-didehydroalanine (Ser)). (E)-cinnamate-binding residues include Asn223, Gln311, Arg317, Asn347, Lys419, Glu448, and Asn451.

This sequence belongs to the PAL/histidase family. Homotetramer. Contains an active site 4-methylidene-imidazol-5-one (MIO), which is formed autocatalytically by cyclization and dehydration of residues Ala-Ser-Gly.

The protein localises to the cytoplasm. It carries out the reaction L-phenylalanine = (E)-cinnamate + NH4(+). The protein operates within phenylpropanoid metabolism; trans-cinnamate biosynthesis; trans-cinnamate from L-phenylalanine: step 1/1. In terms of biological role, catalyzes the non-oxidative deamination of L-phenylalanine to form trans-cinnamic acid, the first step in the phenylpropanoid pathway. In Nostoc punctiforme (strain ATCC 29133 / PCC 73102), this protein is Phenylalanine ammonia-lyase.